The primary structure comprises 451 residues: 2,4-dinitrotoluene dioxygenase system, large oxygenase component (451 aa).

The Rieske domain maps to 42–126 (WLFLTHDSLI…LQSVPFEKEL (85 aa)). [2Fe-2S] cluster-binding residues include Cys84, His86, Cys104, and His107. Fe cation contacts are provided by His211, His216, and Asp365.

It belongs to the bacterial ring-hydroxylating dioxygenase alpha subunit family. The 2,4-dinitrotoluene dioxygenase (DNTDO) multicomponent enzyme system is composed of an electron transfer component and a dioxygenase component (iron sulfur protein (ISP)). The electron transfer component is composed of a ferredoxin reductase (DntAa) and a ferredoxin (DntAb), and the dioxygenase component is formed of a large alpha subunit (DntAc) and a small beta subunit (DntAd). It depends on [2Fe-2S] cluster as a cofactor. Requires Fe(2+) as cofactor.

It carries out the reaction 2,4-dinitrotoluene + NADH + O2 = 4-methyl-5-nitrocatechol + nitrite + NAD(+). In terms of biological role, component of the 2,4-dinitrotoluene dioxygenase (DNTDO) multicomponent enzyme system which catalyzes the incorporation of both atoms of molecular oxygen into 2,4-dinitrotoluene (DNT) to form 4-methyl-5-nitrocatechol (MNC) and nitrite. The alpha subunit has a catalytic role in the holoenzyme. Also able to convert naphthalene to cis-(1R,2S)-dihydroxy-1,2-dihydronaphthalene. This chain is 2,4-dinitrotoluene dioxygenase system, large oxygenase component, found in Burkholderia sp. (strain RASC).